The primary structure comprises 443 residues: Exodeoxyribonuclease 7 large subunit (443 aa).

Belongs to the XseA family. Heterooligomer composed of large and small subunits.

The protein localises to the cytoplasm. It catalyses the reaction Exonucleolytic cleavage in either 5'- to 3'- or 3'- to 5'-direction to yield nucleoside 5'-phosphates.. Its function is as follows. Bidirectionally degrades single-stranded DNA into large acid-insoluble oligonucleotides, which are then degraded further into small acid-soluble oligonucleotides. The chain is Exodeoxyribonuclease 7 large subunit from Vibrio vulnificus (strain CMCP6).